We begin with the raw amino-acid sequence, 236 residues long: UPF0502 protein Bcep1808_3727 (236 aa).

Belongs to the UPF0502 family.

In Burkholderia vietnamiensis (strain G4 / LMG 22486) (Burkholderia cepacia (strain R1808)), this protein is UPF0502 protein Bcep1808_3727.